A 329-amino-acid chain; its full sequence is Malate dehydrogenase (329 aa).

13-19 (GAAGNIS) is an NAD(+) binding site. Substrate is bound by residues R94 and R100. NAD(+) is bound by residues N107, Q114, and 131–133 (VGN). 2 residues coordinate substrate: N133 and R164. H189 functions as the Proton acceptor in the catalytic mechanism.

The protein belongs to the LDH/MDH superfamily. MDH type 2 family.

It catalyses the reaction (S)-malate + NAD(+) = oxaloacetate + NADH + H(+). Its function is as follows. Catalyzes the reversible oxidation of malate to oxaloacetate. The polypeptide is Malate dehydrogenase (Psychrobacter arcticus (strain DSM 17307 / VKM B-2377 / 273-4)).